Here is a 421-residue protein sequence, read N- to C-terminus: Imidazolonepropionase (421 aa).

Residues histidine 81 and histidine 83 each contribute to the Fe(3+) site. Residues histidine 81 and histidine 83 each coordinate Zn(2+). Arginine 90, tyrosine 153, and histidine 186 together coordinate 4-imidazolone-5-propanoate. Tyrosine 153 contacts N-formimidoyl-L-glutamate. Histidine 251 lines the Fe(3+) pocket. Histidine 251 is a Zn(2+) binding site. Residue glutamate 254 participates in 4-imidazolone-5-propanoate binding. Fe(3+) is bound at residue aspartate 326. Residue aspartate 326 coordinates Zn(2+). N-formimidoyl-L-glutamate contacts are provided by asparagine 328 and glycine 330. 4-imidazolone-5-propanoate is bound at residue serine 331.

It belongs to the metallo-dependent hydrolases superfamily. HutI family. The cofactor is Zn(2+). Fe(3+) is required as a cofactor.

The protein localises to the cytoplasm. The catalysed reaction is 4-imidazolone-5-propanoate + H2O = N-formimidoyl-L-glutamate. It functions in the pathway amino-acid degradation; L-histidine degradation into L-glutamate; N-formimidoyl-L-glutamate from L-histidine: step 3/3. Catalyzes the hydrolytic cleavage of the carbon-nitrogen bond in imidazolone-5-propanoate to yield N-formimidoyl-L-glutamate. It is the third step in the universal histidine degradation pathway. This is Imidazolonepropionase from Streptococcus pyogenes serotype M3 (strain SSI-1).